A 342-amino-acid chain; its full sequence is Protein BMEI1586 (342 aa).

Catalysis depends on S90, which acts as the Proton acceptor. Substrate-binding positions include 91 to 92, D251, and 256 to 257; these read GS and GT.

The protein belongs to the proline racemase family. In terms of assembly, homotetramer.

The catalysed reaction is trans-4-hydroxy-L-proline = cis-4-hydroxy-D-proline. Functionally, in vitro, catalyzes the epimerization of trans-4-hydroxy-L-proline (t4LHyp) to cis-4-hydroxy-D-proline (c4DHyp) and that of trans-3-hydroxy-L-proline (t3LHyp) to cis-3-hydroxy-D-proline (c3DHyp), albeit with very low efficiency. The physiological substrate may be different. Displays neither proline racemase activity nor t3LHyp dehydratase activity. The polypeptide is Protein BMEI1586 (Brucella melitensis biotype 1 (strain ATCC 23456 / CCUG 17765 / NCTC 10094 / 16M)).